We begin with the raw amino-acid sequence, 628 residues long: MNAPDKLATLLSLTREPFPASRKSYLQGSRSDLRVPMREVTLTNGETVSLYDTSGPYTEPGVAIDVRRGLPSVRTPWLDERADTEVYAGRLHQALDDGAKHEDREAERIEQLRLDAAALQRPPRRARAGANVTQMHYARRGIVTPEMEYVALRENGKREWMREYLGDAPREQRLRGNPMGAQIPAIVTPEFVRDEVARGRAIIPANINHPEVEPMAIGRNFLVKINANIGNSAVTSSIEEEVEKLVWAIRWGADNVMDLSTGRNIHTTRDWILRNSPVPIGTVPIYQALEKVGGVAEDLTWAIFRDTLIEQAEQGVDYFTIHAGVRLPFIHLTADRRTGIVSRGGSIMAKWCISHHRESFIYEHFEDICDIMKAYDVSFSLGDGLRPGSAADANDEAQFAELRTLGELTQVAWKHDVQTMIEGPGHVPMHMIQANMDEQLKHCHEAPFYTLGPLTIDIAPGYDHIASAIGAAMIGWFGTAMLCYVTPKEHLGLPDREDVKQGIVAYKIAAHAADVAKGHPGARARDDALSKARFEFRWMDQFNLSLDPDTARDFHDETLPKDASKVAHFCSMCGPKFCSMKITQEVRDYAAQRGVSEAQALGAGMAEKSSQFRQAGGEIYIPLAVDKG.

Residues N228, M257, Y286, H322, 342–344 (SRG), 383–386 (DGLR), and E422 contribute to the substrate site. H426 is a Zn(2+) binding site. Substrate is bound at residue Y449. Residue H490 participates in Zn(2+) binding. [4Fe-4S] cluster is bound by residues C570, C573, and C578.

The protein belongs to the ThiC family. As to quaternary structure, homodimer. [4Fe-4S] cluster is required as a cofactor.

It catalyses the reaction 5-amino-1-(5-phospho-beta-D-ribosyl)imidazole + S-adenosyl-L-methionine = 4-amino-2-methyl-5-(phosphooxymethyl)pyrimidine + CO + 5'-deoxyadenosine + formate + L-methionine + 3 H(+). The protein operates within cofactor biosynthesis; thiamine diphosphate biosynthesis. Functionally, catalyzes the synthesis of the hydroxymethylpyrimidine phosphate (HMP-P) moiety of thiamine from aminoimidazole ribotide (AIR) in a radical S-adenosyl-L-methionine (SAM)-dependent reaction. In Methylibium petroleiphilum (strain ATCC BAA-1232 / LMG 22953 / PM1), this protein is Phosphomethylpyrimidine synthase.